Consider the following 689-residue polypeptide: Beta-galactosidase BbgII (689 aa).

Substrate contacts are provided by R122 and N160. E161 functions as the Proton donor in the catalytic mechanism. Residue E320 is the Nucleophile of the active site. Substrate contacts are provided by residues W328 and 368–371 (EKWH).

This sequence belongs to the glycosyl hydrolase 42 family.

It carries out the reaction Hydrolysis of terminal non-reducing beta-D-galactose residues in beta-D-galactosides.. This chain is Beta-galactosidase BbgII, found in Bifidobacterium bifidum (strain DSM 20082 / JCM 1254 / BCRC 11844 / KCTC 3440 / E319f (Variant a)).